Here is a 345-residue protein sequence, read N- to C-terminus: D-fructose 1,6-bisphosphatase class 2/sedoheptulose 1,7-bisphosphatase (345 aa).

Aspartate 33, glutamate 57, aspartate 97, and glutamate 100 together coordinate Mn(2+). Substrate-binding positions include 100–102, tyrosine 131, 176–178, and 198–200; these read EGT, RPR, and DGD. Glutamate 225 is a Mn(2+) binding site.

Belongs to the FBPase class 2 family. In terms of assembly, homotetramer. It depends on Mn(2+) as a cofactor.

It catalyses the reaction beta-D-fructose 1,6-bisphosphate + H2O = beta-D-fructose 6-phosphate + phosphate. It carries out the reaction D-sedoheptulose 1,7-bisphosphate + H2O = D-sedoheptulose 7-phosphate + phosphate. Its pathway is carbohydrate biosynthesis; Calvin cycle. Its function is as follows. Catalyzes the hydrolysis of fructose 1,6-bisphosphate (Fru 1,6-P2) and sedoheptulose 1,7-bisphosphate (Sed 1,7-P2) to fructose 6-phosphate and sedoheptulose 7-phosphate, respectively. This chain is D-fructose 1,6-bisphosphatase class 2/sedoheptulose 1,7-bisphosphatase, found in Microcystis aeruginosa (strain NIES-843 / IAM M-2473).